Consider the following 199-residue polypeptide: MAAVTTDLIRELRERTSAGMMDCKKALEENNADIEKAITWLREKGIAKAAKKAGRETKEGRIVSYIHGNGKIGVLLELNSETDFVSKNEEFEALGKEICMQIAAMNPLYLNEESIPAADLEREKGIMKSQLEAEGKKAEQIEKILPGKIKKYVSEVCLVNQAFFKDDSKTIDDLVKEAIAKFGENITIAHFVRFQVGGL.

Residues 82-85 (TDFV) form an involved in Mg(2+) ion dislocation from EF-Tu region.

This sequence belongs to the EF-Ts family.

The protein localises to the cytoplasm. Functionally, associates with the EF-Tu.GDP complex and induces the exchange of GDP to GTP. It remains bound to the aminoacyl-tRNA.EF-Tu.GTP complex up to the GTP hydrolysis stage on the ribosome. The sequence is that of Elongation factor Ts from Leptospira borgpetersenii serovar Hardjo-bovis (strain JB197).